The sequence spans 411 residues: Dual-specificity RNA methyltransferase RlmN (411 aa).

Glu125 (proton acceptor) is an active-site residue. Positions 131-380 constitute a Radical SAM core domain; that stretch reads EEGRGTLCIS…IRTPRGRDIL (250 aa). A disulfide bond links Cys138 and Cys383. [4Fe-4S] cluster-binding residues include Cys145, Cys149, and Cys152. Residues 209-210, Ser241, 263-265, and Asn340 each bind S-adenosyl-L-methionine; these read GE and SLH. Cys383 serves as the catalytic S-methylcysteine intermediate.

It belongs to the radical SAM superfamily. RlmN family. [4Fe-4S] cluster serves as cofactor.

The protein resides in the cytoplasm. The catalysed reaction is adenosine(2503) in 23S rRNA + 2 reduced [2Fe-2S]-[ferredoxin] + 2 S-adenosyl-L-methionine = 2-methyladenosine(2503) in 23S rRNA + 5'-deoxyadenosine + L-methionine + 2 oxidized [2Fe-2S]-[ferredoxin] + S-adenosyl-L-homocysteine. It carries out the reaction adenosine(37) in tRNA + 2 reduced [2Fe-2S]-[ferredoxin] + 2 S-adenosyl-L-methionine = 2-methyladenosine(37) in tRNA + 5'-deoxyadenosine + L-methionine + 2 oxidized [2Fe-2S]-[ferredoxin] + S-adenosyl-L-homocysteine. Functionally, specifically methylates position 2 of adenine 2503 in 23S rRNA and position 2 of adenine 37 in tRNAs. m2A2503 modification seems to play a crucial role in the proofreading step occurring at the peptidyl transferase center and thus would serve to optimize ribosomal fidelity. This is Dual-specificity RNA methyltransferase RlmN from Brucella canis (strain ATCC 23365 / NCTC 10854 / RM-666).